Here is a 225-residue protein sequence, read N- to C-terminus: Uracil-DNA glycosylase (225 aa).

Asp61 serves as the catalytic Proton acceptor.

Belongs to the uracil-DNA glycosylase (UDG) superfamily. UNG family.

It localises to the cytoplasm. It catalyses the reaction Hydrolyzes single-stranded DNA or mismatched double-stranded DNA and polynucleotides, releasing free uracil.. Excises uracil residues from the DNA which can arise as a result of misincorporation of dUMP residues by DNA polymerase or due to deamination of cytosine. This is Uracil-DNA glycosylase from Actinobacillus pleuropneumoniae serotype 5b (strain L20).